The chain runs to 660 residues: Solute carrier family 5 member 4B (660 aa).

Over 1-27 (MASTLSPSITPQTEEPPVVPVRIQNAA) the chain is Cytoplasmic. Residues 28-48 (DISVIVIYFIVVLAVGLWSMV) form a helical membrane-spanning segment. At 49-54 (RSNRGT) the chain is on the extracellular side. A helical membrane pass occupies residues 55–75 (VGGFFLAGHDMAWWPMGASLF). Over 76 to 82 (ASNIGSN) the chain is Cytoplasmic. The chain crosses the membrane as a helical span at residues 83 to 103 (HFVGLAGTGAASGIAIAAVEW). Residues 104-105 (NA) lie on the Extracellular side of the membrane. Residues 106–126 (LLMVLVLGWVFLPIYIKAGVL) form a helical membrane-spanning segment. Topologically, residues 127-142 (TMPEYLRKRFGGKRLQ) are cytoplasmic. The helical transmembrane segment at 143–163 (IYLSVLSLFIMVALQTSSIIF) threads the bilayer. Residues 164 to 166 (SGA) are Extracellular-facing. Residues 167–187 (IFIQLALGLNLYLAVFILLAI) traverse the membrane as a helical segment. The Cytoplasmic portion of the chain corresponds to 188–208 (TAFYTVAGGLASVIYTDSVQT). A helical membrane pass occupies residues 209-229 (FIMLLGSLILMGFAFAEVGGY). At 230-277 (ESFTEKYMNAIPSVVEGDNLTISPKCYTPQPDSFHVFRDPVTGDIPWP) the chain is on the extracellular side. The chain crosses the membrane as a helical span at residues 278–298 (GLIFGMTILAIWYWCADQVIV). At 299–313 (QRCLCGKNMSHVKAA) the chain is on the cytoplasmic side. Residues 314-334 (CILCGYLKLLPMFLMVMPGMI) traverse the membrane as a helical segment. The Extracellular segment spans residues 335–380 (SRILYTDKVACVVPSECEKQCGTAVGCTNYAYPTLVLELMPDGLRG). Residues 381 to 401 (LMLSVMLASLMSSLTSIFNSA) form a helical membrane-spanning segment. Over 402–423 (STLFTIDLYTKIRKKASERELM) the chain is Cytoplasmic. The chain crosses the membrane as a helical span at residues 424 to 444 (IAGRIFGMVLIAVSILWVPLV). Residues 445 to 455 (QVSQNGQLFHY) lie on the Extracellular side of the membrane. A helical transmembrane segment spans residues 456 to 476 (IGSVSSYLGPPLGAVFMLAIF). Residues 477 to 484 (FKRVNEQG) are Cytoplasmic-facing. A helical membrane pass occupies residues 485-505 (AFWGLMVGLVVGLIRLIAEFV). At 506–526 (YGTGSCVAPSNCPKIICGVHY) the chain is on the extracellular side. Residues 527-547 (MYFAIILFFVSIIVILGVSFL) form a helical membrane-spanning segment. Over 548-639 (TEPIPDVHLY…DTSEKPLWRT (92 aa)) the chain is Cytoplasmic. The helical transmembrane segment at 640–660 (VMNINAVLLLGVAVFVHAYFA) threads the bilayer.

It belongs to the sodium:solute symporter (SSF) (TC 2.A.21) family. In terms of tissue distribution, expressed in small intestine. Expressed in kidney.

Its subcellular location is the cell membrane. It catalyses the reaction D-glucose(out) + 2 Na(+)(out) = D-glucose(in) + 2 Na(+)(in). Inhibited by phlorizin. Functionally, low-affinity sodium/D-glucose symporter. Generates D-glucose-induced depolarization in a pH-independent manner. The chain is Solute carrier family 5 member 4B from Mus musculus (Mouse).